The sequence spans 433 residues: D-amino acid dehydrogenase (433 aa).

FAD is bound at residue 3 to 17 (IVVLGAGVLGVTSAW).

The protein belongs to the DadA oxidoreductase family. FAD is required as a cofactor.

It carries out the reaction a D-alpha-amino acid + A + H2O = a 2-oxocarboxylate + AH2 + NH4(+). It functions in the pathway amino-acid degradation; D-alanine degradation; NH(3) and pyruvate from D-alanine: step 1/1. Functionally, oxidative deamination of D-amino acids. The protein is D-amino acid dehydrogenase of Paracoccus denitrificans (strain Pd 1222).